A 288-amino-acid chain; its full sequence is uncharacterized protein (288 aa).

This is an uncharacterized protein from Methanocaldococcus jannaschii (strain ATCC 43067 / DSM 2661 / JAL-1 / JCM 10045 / NBRC 100440) (Methanococcus jannaschii).